A 70-amino-acid polypeptide reads, in one-letter code: Large ribosomal subunit protein uL29 (70 aa).

Belongs to the universal ribosomal protein uL29 family.

The protein is Large ribosomal subunit protein uL29 of Thermosynechococcus vestitus (strain NIES-2133 / IAM M-273 / BP-1).